The chain runs to 722 residues: Exocyst complex component 3-like protein 4 (722 aa).

2 disordered regions span residues 1-53 (MPSP…LGSL) and 92-131 (NDGP…KPEA). Residues 34–46 (SRKEPNAHRKDGT) are compositionally biased toward basic and acidic residues. Phosphoserine is present on S52. Positions 113–122 (GVSQQASTGA) are enriched in polar residues. Residue S513 is modified to Phosphoserine.

It belongs to the SEC6 family.

This Homo sapiens (Human) protein is Exocyst complex component 3-like protein 4 (EXOC3L4).